The following is a 512-amino-acid chain: Ribose import ATP-binding protein RbsA 2 (512 aa).

2 ABC transporter domains span residues 7–242 (LEIR…VGRE) and 257–498 (LGEP…SGIG). 39 to 46 (GENGAGKS) serves as a coordination point for ATP.

The protein belongs to the ABC transporter superfamily. Ribose importer (TC 3.A.1.2.1) family. As to quaternary structure, the complex is composed of an ATP-binding protein (RbsA), two transmembrane proteins (RbsC) and a solute-binding protein (RbsB).

It localises to the cell inner membrane. The enzyme catalyses D-ribose(out) + ATP + H2O = D-ribose(in) + ADP + phosphate + H(+). In terms of biological role, part of the ABC transporter complex RbsABC involved in ribose import. Responsible for energy coupling to the transport system. The polypeptide is Ribose import ATP-binding protein RbsA 2 (Rhizobium meliloti (strain 1021) (Ensifer meliloti)).